A 941-amino-acid chain; its full sequence is Isoleucine--tRNA ligase (941 aa).

Positions 58–68 (PYANGNIHLGH) match the 'HIGH' region motif. Glu564 contributes to the L-isoleucyl-5'-AMP binding site. A 'KMSKS' region motif is present at residues 605–609 (KMSKS). Lys608 contacts ATP. Zn(2+) contacts are provided by Cys904, Cys907, Cys924, and Cys927.

Belongs to the class-I aminoacyl-tRNA synthetase family. IleS type 1 subfamily. Monomer. The cofactor is Zn(2+).

The protein localises to the cytoplasm. The enzyme catalyses tRNA(Ile) + L-isoleucine + ATP = L-isoleucyl-tRNA(Ile) + AMP + diphosphate. Its function is as follows. Catalyzes the attachment of isoleucine to tRNA(Ile). As IleRS can inadvertently accommodate and process structurally similar amino acids such as valine, to avoid such errors it has two additional distinct tRNA(Ile)-dependent editing activities. One activity is designated as 'pretransfer' editing and involves the hydrolysis of activated Val-AMP. The other activity is designated 'posttransfer' editing and involves deacylation of mischarged Val-tRNA(Ile). The sequence is that of Isoleucine--tRNA ligase from Hahella chejuensis (strain KCTC 2396).